A 118-amino-acid polypeptide reads, in one-letter code: Large ribosomal subunit protein uL22c (118 aa).

The protein belongs to the universal ribosomal protein uL22 family. As to quaternary structure, part of the 50S ribosomal subunit.

It is found in the plastid. Its subcellular location is the chloroplast. Functionally, this protein binds specifically to 23S rRNA. In terms of biological role, the globular domain of the protein is located near the polypeptide exit tunnel on the outside of the subunit, while an extended beta-hairpin is found that lines the wall of the exit tunnel in the center of the 70S ribosome. The sequence is that of Large ribosomal subunit protein uL22c (rpl22) from Rhodomonas salina (Cryptomonas salina).